We begin with the raw amino-acid sequence, 177 residues long: Ribosome rescue factor SmrB (177 aa).

Residues 22–45 form a disordered region; sequence SKKLRQDTIIHQPSKNFSEQQKQR. Residues 30 to 41 show a composition bias toward polar residues; it reads IIHQPSKNFSEQ. In terms of domain architecture, Smr spans 98 to 173; it reads LDMHGMKQDE…GAGAILVLLS (76 aa).

It belongs to the SmrB family. As to quaternary structure, associates with collided ribosomes, but not with correctly translating polysomes.

Functionally, acts as a ribosome collision sensor. Detects stalled/collided disomes (pairs of ribosomes where the leading ribosome is stalled and a second ribosome has collided with it) and endonucleolytically cleaves mRNA at the 5' boundary of the stalled ribosome. Stalled/collided disomes form a new interface (primarily via the 30S subunits) that binds SmrB. Cleaved mRNA becomes available for tmRNA ligation, leading to ribosomal subunit dissociation and rescue of stalled ribosomes. This chain is Ribosome rescue factor SmrB, found in Aliivibrio salmonicida (strain LFI1238) (Vibrio salmonicida (strain LFI1238)).